The sequence spans 121 residues: Small ribosomal subunit protein uS13 (121 aa).

The disordered stretch occupies residues 94–121 (GLPVRGQKTRNNAHTVKGKPKAIAGKKK). The segment covering 109 to 121 (VKGKPKAIAGKKK) has biased composition (basic residues).

The protein belongs to the universal ribosomal protein uS13 family. As to quaternary structure, part of the 30S ribosomal subunit. Forms a loose heterodimer with protein S19. Forms two bridges to the 50S subunit in the 70S ribosome.

Functionally, located at the top of the head of the 30S subunit, it contacts several helices of the 16S rRNA. In the 70S ribosome it contacts the 23S rRNA (bridge B1a) and protein L5 of the 50S subunit (bridge B1b), connecting the 2 subunits; these bridges are implicated in subunit movement. Contacts the tRNAs in the A and P-sites. The sequence is that of Small ribosomal subunit protein uS13 from Onion yellows phytoplasma (strain OY-M).